Here is a 307-residue protein sequence, read N- to C-terminus: Glutathione synthetase (307 aa).

The 185-residue stretch at 120-304 (KLGALRYSHL…VSDKVIEKLL (185 aa)) folds into the ATP-grasp domain. ATP is bound at residue 146-202 (AQINHDVVVKPLGGKGGQGVIRLTKDSPGIKAMIELITSQEQLPVMMQKFIPEVKEG). Positions 275 and 277 each coordinate Mg(2+).

It belongs to the prokaryotic GSH synthase family. Mg(2+) serves as cofactor. Mn(2+) is required as a cofactor.

It catalyses the reaction gamma-L-glutamyl-L-cysteine + glycine + ATP = glutathione + ADP + phosphate + H(+). Its pathway is sulfur metabolism; glutathione biosynthesis; glutathione from L-cysteine and L-glutamate: step 2/2. This is Glutathione synthetase from Prochlorococcus marinus subsp. pastoris (strain CCMP1986 / NIES-2087 / MED4).